A 688-amino-acid polypeptide reads, in one-letter code: Polyribonucleotide nucleotidyltransferase (688 aa).

2 residues coordinate Mg(2+): Asp-484 and Asp-490. The region spanning 550 to 609 (PTTEIFNVAPDKIIEIIGQGGRVIREIVEKFEVKIDLNKPSGEVKIMGNKERVLKTKEFI) is the KH domain. Residues 626-688 (DEVLEAQVKR…NKGKIALDLA (63 aa)) enclose the S1 motif domain.

The protein belongs to the polyribonucleotide nucleotidyltransferase family. Requires Mg(2+) as cofactor.

It localises to the cytoplasm. The enzyme catalyses RNA(n+1) + phosphate = RNA(n) + a ribonucleoside 5'-diphosphate. In terms of biological role, involved in mRNA degradation. Catalyzes the phosphorolysis of single-stranded polyribonucleotides processively in the 3'- to 5'-direction. This Helicobacter acinonychis (strain Sheeba) protein is Polyribonucleotide nucleotidyltransferase.